We begin with the raw amino-acid sequence, 337 residues long: Histidine N-acetyltransferase (337 aa).

Positions 1 to 2 are cleaved as a propeptide — removed in mature form; the sequence is MK. The 136-residue stretch at 21-156 folds into the N-acetyltransferase domain; sequence LQFAVATEED…QGILLVRFRA (136 aa).

The enzyme catalyses L-histidine + acetyl-CoA = N(alpha)-acetyl-L-histidine + CoA + H(+). Enzyme responsible for the N-acetyl-histidine (NAH) synthesis, which is a major constituent of brain and lens of ectothermic vertebrates. This chain is Histidine N-acetyltransferase (hisat), found in Scomber australasicus (Blue mackerel).